A 275-amino-acid chain; its full sequence is Large ribosomal subunit protein uL2 (275 aa).

Residues 223 to 275 are disordered; the sequence is VAMNPVDHPHGGGEGRTSGGRHPVSPWGQPTKGYKTRSNKRTDKYIVRRRNKK.

Belongs to the universal ribosomal protein uL2 family. In terms of assembly, part of the 50S ribosomal subunit. Forms a bridge to the 30S subunit in the 70S ribosome.

Its function is as follows. One of the primary rRNA binding proteins. Required for association of the 30S and 50S subunits to form the 70S ribosome, for tRNA binding and peptide bond formation. It has been suggested to have peptidyltransferase activity; this is somewhat controversial. Makes several contacts with the 16S rRNA in the 70S ribosome. This Shewanella pealeana (strain ATCC 700345 / ANG-SQ1) protein is Large ribosomal subunit protein uL2.